A 387-amino-acid polypeptide reads, in one-letter code: uncharacterized protein (387 aa).

The interval 1–23 (MSSLPRNAVARNSKMHKKRDSGV) is disordered. The stretch at 98 to 129 (KIARDLKKRQEDYEKTKLEVERLKRSEELANK) forms a coiled coil. A disordered region spans residues 146–255 (ENNTVEPNNE…NKKKKKEKNK (110 aa)). 2 stretches are compositionally biased toward low complexity: residues 162–175 (EQIT…TTEQ) and 182–194 (EQTT…QTAE). A compositionally biased stretch (basic and acidic residues) spans 204-213 (TVEKSGDQST). Polar residues predominate over residues 214-231 (EKTTQQTAEESVEQSTEQ).

This is an uncharacterized protein from Acanthamoeba polyphaga mimivirus (APMV).